The chain runs to 418 residues: Putative ion-transport protein YfeO (418 aa).

Helical transmembrane passes span 10–30 (LLLS…LIVV), 54–74 (DSPL…GLVI), 99–119 (ALPG…SLGP), 120–140 (EHPI…RLLP), 149–169 (ILAS…AALI), 186–206 (LFAP…FFHP), 223–243 (ILSG…AVWC), 258–278 (VLVL…GGPV), 300–320 (DYFL…ASGF), 322–342 (GGRI…LHEH), 343–363 (VPAV…VLVV), and 371–391 (LFMA…CIVM).

Belongs to the chloride channel (TC 2.A.49) family.

Its subcellular location is the cell membrane. This is Putative ion-transport protein YfeO from Shigella boydii serotype 4 (strain Sb227).